The sequence spans 232 residues: Small ribosomal subunit protein uS5 (232 aa).

Residues 1-47 form a disordered region; sequence MAAEVTETAQPVETAASTDNNREQREPRRGGRERNPNRDRGNRDADK. Residues 7–19 are compositionally biased toward polar residues; the sequence is ETAQPVETAASTD. Positions 20–47 are enriched in basic and acidic residues; sequence NNREQREPRRGGRERNPNRDRGNRDADK. The region spanning 50 to 113 is the S5 DRBM domain; the sequence is FLERVVTINR…EEAKKNFFRV (64 aa).

The protein belongs to the universal ribosomal protein uS5 family. In terms of assembly, part of the 30S ribosomal subunit. Contacts proteins S4 and S8.

In terms of biological role, with S4 and S12 plays an important role in translational accuracy. Its function is as follows. Located at the back of the 30S subunit body where it stabilizes the conformation of the head with respect to the body. The chain is Small ribosomal subunit protein uS5 from Leifsonia xyli subsp. xyli (strain CTCB07).